The following is a 121-amino-acid chain: Securin (121 aa).

The segment at R1–K24 is disordered. 2 consecutive short sequence motifs (TEK-box) follow at residues T3–K5 and T26–K28. Residues L93–L121 form a disordered region. Positions P95 to P105 match the SH3-binding motif. Positions P95–P105 are enriched in pro residues. S97 is modified (phosphoserine; by CDK1). Polar residues predominate over residues V110–L121.

This sequence belongs to the securin family. Interacts with the caspase-like ESPL1, and prevents its protease activity probably by covering its active site. Interacts with p53/TP53 and blocks its activity probably by blocking its binding to DNA. Interacts with the Ku 70 kDa subunit of ds-DNA kinase. Interacts with PTTG1IP. Interacts with RPS10 and DNAJA1. Post-translationally, phosphorylated by CDK1 during mitosis. Phosphorylated in vitro by ds-DNA kinase. In terms of processing, ubiquitinated through 'Lys-11' linkage of ubiquitin moieties by the anaphase promoting complex (APC) at the onset of anaphase, conducting to its degradation. 'Lys-11'-linked ubiquitination is mediated by the E2 ligase UBE2C/UBCH10.

It localises to the cytoplasm. It is found in the nucleus. Regulatory protein, which plays a central role in chromosome stability, in the p53/TP53 pathway, and DNA repair. Probably acts by blocking the action of key proteins. During the mitosis, it blocks Separase/ESPL1 function, preventing the proteolysis of the cohesin complex and the subsequent segregation of the chromosomes. At the onset of anaphase, it is ubiquitinated, conducting to its destruction and to the liberation of ESPL1. Its function is however not limited to a blocking activity, since it is required to activate ESPL1. Negatively regulates the transcriptional activity and related apoptosis activity of p53/TP53. The negative regulation of p53/TP53 may explain the strong transforming capability of the protein when it is overexpressed. May also play a role in DNA repair via its interaction with Ku, possibly by connecting DNA damage-response pathways with sister chromatid separation. This Sus scrofa (Pig) protein is Securin (PTTG1).